A 304-amino-acid polypeptide reads, in one-letter code: bZIP transcription factor 50 (304 aa).

Residues 1 to 222 are Cytoplasmic-facing; it reads MDVEFFADLD…MQESAVLTET (222 aa). Disordered stretches follow at residues 26 to 60 and 94 to 163; these read GSGVSGLFAPSPPHDAEAGSPESVSSRRPSPSREA and GEEE…ERKK. Positions 45-59 are enriched in low complexity; it reads SPESVSSRRPSPSRE. Residues 127 to 139 are compositionally biased toward acidic residues; that stretch reads EKEDVEAEVDGDD. The 63-residue stretch at 141 to 203 folds into the bZIP domain; it reads MSKKKRRQMR…NMALRQSLLK (63 aa). The segment at 143–167 is basic motif; sequence KKKRRQMRNRDSAMKSRERKKMYVK. Residues 150 to 163 show a composition bias toward basic and acidic residues; sequence RNRDSAMKSRERKK. The tract at residues 169-183 is leucine-zipper; sequence LETKSKYLEAECRRL. Residues 223–243 form a helical membrane-spanning segment; that stretch reads LPLVSLLWLVSIVCLLPVPGL. The Lumenal portion of the chain corresponds to 244-304; sequence PNRNPVARSS…GPFRLAAAAC (61 aa).

Belongs to the bZIP family.

It is found in the endoplasmic reticulum membrane. It localises to the nucleus. Transcriptionally activated by IRE1 in response to endoplasmic reticulum (ER) stress. IRE1 cleaves a 20-bp fragment causing a frameshift of the mRNA transcript, leading to a nuclear isoform of the BZIP50 activator. In terms of biological role, transcription factor involved in endoplasmic reticulum (ER) stress response. Acts downstream of the ER stress sensors IRE1, BZIP39 and BZIP60 to activate BiP chaperone genes. The sequence is that of bZIP transcription factor 50 from Oryza sativa subsp. japonica (Rice).